A 178-amino-acid polypeptide reads, in one-letter code: Large ribosomal subunit protein uL6 (178 aa).

The protein belongs to the universal ribosomal protein uL6 family. As to quaternary structure, part of the 50S ribosomal subunit.

This protein binds to the 23S rRNA, and is important in its secondary structure. It is located near the subunit interface in the base of the L7/L12 stalk, and near the tRNA binding site of the peptidyltransferase center. This is Large ribosomal subunit protein uL6 from Helicobacter pylori (strain J99 / ATCC 700824) (Campylobacter pylori J99).